The primary structure comprises 436 residues: GTPase Der (436 aa).

2 EngA-type G domains span residues 4 to 167 and 175 to 351; these read PTVA…PVEE and IRFS…ESQN. GTP contacts are provided by residues 10-17, 57-61, 119-122, 181-188, 229-233, and 294-297; these read GRPNVGKS, DTGGI, NKVD, DTAGM, and NKWD. The KH-like domain maps to 352–436; the sequence is KRIPSAVLND…PIHLIARKRK (85 aa).

It belongs to the TRAFAC class TrmE-Era-EngA-EngB-Septin-like GTPase superfamily. EngA (Der) GTPase family. In terms of assembly, associates with the 50S ribosomal subunit.

In terms of biological role, GTPase that plays an essential role in the late steps of ribosome biogenesis. This is GTPase Der from Streptococcus pyogenes serotype M3 (strain ATCC BAA-595 / MGAS315).